A 618-amino-acid polypeptide reads, in one-letter code: Putative UDP-glucuronate:xylan alpha-glucuronosyltransferase 3 (618 aa).

The helical; Signal-anchor for type II membrane protein transmembrane segment at 32 to 54 (GVKFNTLKLVLICIMLGALFTIY) threads the bilayer. Residues aspartate 379 and aspartate 381 each coordinate Mn(2+). Residues 379 to 381 (DAD), 408 to 410 (NSG), 435 to 439 (NGGDQ), and 489 to 495 (HYLGYNK) each bind substrate. Histidine 489 lines the Mn(2+) pocket. Low complexity predominate over residues 598 to 608 (TNNSSTTTTSS). The segment at 598–618 (TNNSSTTTTSSPPHKTALPSL) is disordered.

The protein belongs to the glycosyltransferase 8 family. Glycogenin subfamily. The cofactor is Mn(2+).

The protein localises to the golgi apparatus membrane. Functionally, may be involved in the substitutions of the xylan backbone in stem glucuronoxylan. This is Putative UDP-glucuronate:xylan alpha-glucuronosyltransferase 3 (GUX3) from Arabidopsis thaliana (Mouse-ear cress).